A 238-amino-acid polypeptide reads, in one-letter code: Zinc finger protein ZAT6 (238 aa).

Residues 1–15 (MALETLTSPRLSSPM) are compositionally biased toward polar residues. The tract at residues 1–42 (MALETLTSPRLSSPMPTLFQDSALGFHGSKGKRSKRSRSEFD) is disordered. Positions 30–38 (KGKRSKRSR) match the Nuclear localization signal motif. 2 C2H2-type zinc fingers span residues 89–111 (YKCS…KASH) and 148–170 (HVCS…KRCH). The tract at residues 175 to 202 (NGGGVSSSVSNSEDVGSTSHVSSGHRGF) is disordered. Over residues 180-193 (SSSVSNSEDVGSTS) the composition is skewed to low complexity.

It localises to the nucleus. In terms of biological role, probable transcription factor that regulates root development and phosphate (Pi) acquisition and homeostasis. Probably acts as a repressor of primary root growth and regulates Pi homeostasis through the control of root architecture. In Arabidopsis thaliana (Mouse-ear cress), this protein is Zinc finger protein ZAT6 (ZAT6).